The following is a 681-amino-acid chain: DNA-directed RNA polymerase subunit beta' (681 aa).

4 residues coordinate Zn(2+): Cys69, Cys71, Cys87, and Cys90. Residues Asp489, Asp491, and Asp493 each coordinate Mg(2+).

It belongs to the RNA polymerase beta' chain family. RpoC1 subfamily. In terms of assembly, in plastids the minimal PEP RNA polymerase catalytic core is composed of four subunits: alpha, beta, beta', and beta''. When a (nuclear-encoded) sigma factor is associated with the core the holoenzyme is formed, which can initiate transcription. Mg(2+) is required as a cofactor. Requires Zn(2+) as cofactor.

Its subcellular location is the plastid. It localises to the chloroplast. It carries out the reaction RNA(n) + a ribonucleoside 5'-triphosphate = RNA(n+1) + diphosphate. In terms of biological role, DNA-dependent RNA polymerase catalyzes the transcription of DNA into RNA using the four ribonucleoside triphosphates as substrates. This is DNA-directed RNA polymerase subunit beta' from Atropa belladonna (Belladonna).